The sequence spans 168 residues: Photosystem I assembly protein Ycf3 (168 aa).

TPR repeat units lie at residues 35 to 68 (AFTYYRDGMSAQSEGNYAEALQNYYEAMRLEIDP), 72 to 105 (SYILYNIGLIHTSNGEHTKALEYYFRALERNPFL), and 120 to 153 (GEQAIQQGDSEIAEAWFDQAAEYWKQAIALTPGN).

It belongs to the Ycf3 family.

The protein resides in the plastid. The protein localises to the chloroplast thylakoid membrane. Essential for the assembly of the photosystem I (PSI) complex. May act as a chaperone-like factor to guide the assembly of the PSI subunits. This chain is Photosystem I assembly protein Ycf3, found in Solanum bulbocastanum (Wild potato).